A 107-amino-acid polypeptide reads, in one-letter code: uncharacterized protein (107 aa).

Residues Leu-25–Trp-42 form a helical membrane-spanning segment.

It is found in the host membrane. This is an uncharacterized protein from Galliformes (FAdV-1).